The chain runs to 346 residues: Biotin synthase (346 aa).

In terms of domain architecture, Radical SAM core spans 38-256 (RQVQVSTLLS…IAVARIMMPT (219 aa)). Residues C53, C57, and C60 each contribute to the [4Fe-4S] cluster site. The [2Fe-2S] cluster site is built by C97, C128, C188, and R260.

Belongs to the radical SAM superfamily. Biotin synthase family. Homodimer. [4Fe-4S] cluster serves as cofactor. Requires [2Fe-2S] cluster as cofactor.

It catalyses the reaction (4R,5S)-dethiobiotin + (sulfur carrier)-SH + 2 reduced [2Fe-2S]-[ferredoxin] + 2 S-adenosyl-L-methionine = (sulfur carrier)-H + biotin + 2 5'-deoxyadenosine + 2 L-methionine + 2 oxidized [2Fe-2S]-[ferredoxin]. Its pathway is cofactor biosynthesis; biotin biosynthesis; biotin from 7,8-diaminononanoate: step 2/2. Catalyzes the conversion of dethiobiotin (DTB) to biotin by the insertion of a sulfur atom into dethiobiotin via a radical-based mechanism. This is Biotin synthase from Escherichia coli (strain K12 / DH10B).